A 112-amino-acid chain; its full sequence is Gastrula zinc finger protein XlCGF16.1 (112 aa).

4 C2H2-type zinc fingers span residues 6 to 28 (YNCSECHKRFRSKSGFVKHQKTH), 34 to 56 (FVCFVCEQRFVCHSALIGHQRIH), 62 to 84 (FSCTECGKCFSRRSHLNSHHKTH), and 90 to 112 (FLCFACGKCFASRSHLTAHHRTH).

It belongs to the krueppel C2H2-type zinc-finger protein family.

Its subcellular location is the nucleus. Functionally, may be involved in transcriptional regulation. The sequence is that of Gastrula zinc finger protein XlCGF16.1 from Xenopus laevis (African clawed frog).